We begin with the raw amino-acid sequence, 168 residues long: Sensor histidine kinase component HK1 (168 aa).

The Histidine kinase; second part domain maps to 1–141 (MPITPLLHES…ELRITLPTPR (141 aa)). Residues 137–168 (LPTPRPPFHEELPRITSSDTKDPNREHDTSDQ) are disordered. Positions 143–168 (PFHEELPRITSSDTKDPNREHDTSDQ) are enriched in basic and acidic residues.

In terms of assembly, interacts with HK2.

It carries out the reaction ATP + protein L-histidine = ADP + protein N-phospho-L-histidine.. Member of the three-protein two-component system HK1/HK2/TcrA. Kinase that binds ATP and catalyzes the transfer of a phosphoryl group from ATP to HK2. The polypeptide is Sensor histidine kinase component HK1 (Mycobacterium tuberculosis (strain ATCC 25618 / H37Rv)).